Consider the following 771-residue polypeptide: Probable exo-1,4-beta-xylosidase xlnD (771 aa).

An N-terminal signal peptide occupies residues 1–25 (MARIMSWHYGKAITLFVCLGPVALS). A glycan (N-linked (GlcNAc...) asparagine) is linked at Asn67. Asp293 is an active-site residue. N-linked (GlcNAc...) asparagine glycans are attached at residues Asn305, Asn345, Asn423, and Asn464.

This sequence belongs to the glycosyl hydrolase 3 family.

The protein resides in the secreted. The enzyme catalyses Hydrolysis of (1-&gt;4)-beta-D-xylans, to remove successive D-xylose residues from the non-reducing termini.. Its pathway is glycan degradation; xylan degradation. In terms of biological role, xylan 1,4-beta-xylosidase involved in the hydrolysis of xylan, a major structural heterogeneous polysaccharide found in plant biomass representing the second most abundant polysaccharide in the biosphere, after cellulose. The chain is Probable exo-1,4-beta-xylosidase xlnD (xlnD) from Neosartorya fischeri (strain ATCC 1020 / DSM 3700 / CBS 544.65 / FGSC A1164 / JCM 1740 / NRRL 181 / WB 181) (Aspergillus fischerianus).